The sequence spans 330 residues: Nodulation protein D 2 (330 aa).

The HTH lysR-type domain maps to 6-63; that stretch reads LDLNLLVALDALITERNLSSAARKINLSQPAMSAAVARLRKHFRDELFGMRGRELVLS. Positions 23–42 form a DNA-binding region, H-T-H motif; it reads LSSAARKINLSQPAMSAAVA. Residues 308–330 form a disordered region; the sequence is RVTSSPEDAEPPGHFVRSVSPLP.

It belongs to the LysR transcriptional regulatory family.

Its function is as follows. NodD regulates the expression of the nodABCFE genes which encode other nodulation proteins. NodD is also a negative regulator of its own expression. Binds flavonoids as inducers. This Bradyrhizobium diazoefficiens (strain JCM 10833 / BCRC 13528 / IAM 13628 / NBRC 14792 / USDA 110) protein is Nodulation protein D 2 (nodD2).